The following is a 355-amino-acid chain: Methylthioribose-1-phosphate isomerase (355 aa).

Substrate contacts are provided by residues 52 to 54 (RGA), arginine 95, and glutamine 204. The active-site Proton donor is the aspartate 245. A substrate-binding site is contributed by 255–256 (NK).

Belongs to the eIF-2B alpha/beta/delta subunits family. MtnA subfamily.

The enzyme catalyses 5-(methylsulfanyl)-alpha-D-ribose 1-phosphate = 5-(methylsulfanyl)-D-ribulose 1-phosphate. The protein operates within amino-acid biosynthesis; L-methionine biosynthesis via salvage pathway; L-methionine from S-methyl-5-thio-alpha-D-ribose 1-phosphate: step 1/6. In terms of biological role, catalyzes the interconversion of methylthioribose-1-phosphate (MTR-1-P) into methylthioribulose-1-phosphate (MTRu-1-P). In Acaryochloris marina (strain MBIC 11017), this protein is Methylthioribose-1-phosphate isomerase.